Consider the following 344-residue polypeptide: GTP 3',8-cyclase (344 aa).

Positions 19-239 constitute a Radical SAM core domain; the sequence is PFGRTIDYLR…ANYTLTDLPD (221 aa). A GTP-binding site is contributed by Arg-28. [4Fe-4S] cluster is bound by residues Cys-35 and Cys-39. Tyr-41 provides a ligand contact to S-adenosyl-L-methionine. A [4Fe-4S] cluster-binding site is contributed by Cys-42. Residue Arg-77 participates in GTP binding. Position 81 (Gly-81) interacts with S-adenosyl-L-methionine. Thr-111 is a GTP binding site. S-adenosyl-L-methionine is bound at residue Ser-135. Lys-171 provides a ligand contact to GTP. Met-205 serves as a coordination point for S-adenosyl-L-methionine. Positions 268 and 271 each coordinate [4Fe-4S] cluster. Residue 273–275 participates in GTP binding; the sequence is RVR. Cys-285 contacts [4Fe-4S] cluster.

The protein belongs to the radical SAM superfamily. MoaA family. Monomer and homodimer. It depends on [4Fe-4S] cluster as a cofactor.

It carries out the reaction GTP + AH2 + S-adenosyl-L-methionine = (8S)-3',8-cyclo-7,8-dihydroguanosine 5'-triphosphate + 5'-deoxyadenosine + L-methionine + A + H(+). It participates in cofactor biosynthesis; molybdopterin biosynthesis. Functionally, catalyzes the cyclization of GTP to (8S)-3',8-cyclo-7,8-dihydroguanosine 5'-triphosphate. This is GTP 3',8-cyclase from Rhodopseudomonas palustris (strain TIE-1).